The chain runs to 333 residues: Glycerol-3-phosphate dehydrogenase [NAD(P)+] (333 aa).

NADPH-binding residues include Phe19, Arg40, Arg41, and Lys113. Residues Lys113 and Gly141 each contribute to the sn-glycerol 3-phosphate site. Ala145 lines the NADPH pocket. Residues Lys196, Asp249, Ser259, Arg260, and Asn261 each contribute to the sn-glycerol 3-phosphate site. Lys196 serves as the catalytic Proton acceptor. Residue Arg260 coordinates NADPH. Residues Val282 and Glu283 each contribute to the NADPH site.

This sequence belongs to the NAD-dependent glycerol-3-phosphate dehydrogenase family.

The protein localises to the cytoplasm. The catalysed reaction is sn-glycerol 3-phosphate + NAD(+) = dihydroxyacetone phosphate + NADH + H(+). The enzyme catalyses sn-glycerol 3-phosphate + NADP(+) = dihydroxyacetone phosphate + NADPH + H(+). The protein operates within membrane lipid metabolism; glycerophospholipid metabolism. Functionally, catalyzes the reduction of the glycolytic intermediate dihydroxyacetone phosphate (DHAP) to sn-glycerol 3-phosphate (G3P), the key precursor for phospholipid synthesis. This is Glycerol-3-phosphate dehydrogenase [NAD(P)+] from Sinorhizobium fredii (strain NBRC 101917 / NGR234).